The sequence spans 187 residues: UPF0301 protein YPO0936/y3322/YP_3506 (187 aa).

This sequence belongs to the UPF0301 (AlgH) family.

This chain is UPF0301 protein YPO0936/y3322/YP_3506, found in Yersinia pestis.